The primary structure comprises 783 residues: Endonuclease MutS2 (783 aa).

Gly-333 to Thr-340 is a binding site for ATP. Positions Ile-708–Lys-783 constitute a Smr domain.

It belongs to the DNA mismatch repair MutS family. MutS2 subfamily. In terms of assembly, homodimer. Binds to stalled ribosomes, contacting rRNA.

Its function is as follows. Endonuclease that is involved in the suppression of homologous recombination and thus may have a key role in the control of bacterial genetic diversity. Acts as a ribosome collision sensor, splitting the ribosome into its 2 subunits. Detects stalled/collided 70S ribosomes which it binds and splits by an ATP-hydrolysis driven conformational change. Acts upstream of the ribosome quality control system (RQC), a ribosome-associated complex that mediates the extraction of incompletely synthesized nascent chains from stalled ribosomes and their subsequent degradation. Probably generates substrates for RQC. The sequence is that of Endonuclease MutS2 from Finegoldia magna (strain ATCC 29328 / DSM 20472 / WAL 2508) (Peptostreptococcus magnus).